Reading from the N-terminus, the 1556-residue chain is Ras guanine nucleotide exchange factor G (1556 aa).

4 disordered regions span residues 19–63 (IGNI…KNRG), 93–141 (LQLN…SSTT), 163–239 (SHVT…LSPS), and 254–296 (ATDS…NNNS). 2 stretches are compositionally biased toward low complexity: residues 25-54 (NNNN…SGSN) and 96-141 (NDTD…SSTT). Positions 170 to 186 (DDDDDDESSSSEEDFDS) are enriched in acidic residues. Positions 196 to 216 (TSSTTATTTTTTTSVSPLTSS) are enriched in low complexity. Residues 256–271 (DSDNQSLEPCNNKTIV) show a composition bias toward polar residues. Over residues 279 to 295 (DNNNNHNNNNNNNNNNN) the composition is skewed to low complexity. Residues 307–353 (NKTFLDLDEKIYLKIFGYLFAEDLCSINRVSKHLCNIINNQQLWKDL) form the F-box 1 domain. Residues 385–416 (NNNNNNNNNNNNNNNNSNISNNNNNINNSNGN) are disordered. The 48-residue stretch at 679–726 (VFDISRVSDILLIKIFRNLDSIKDLSVCQRVSKRWNKAIAISSLWEQL) folds into the F-box 2 domain. Disordered regions lie at residues 762–815 (QPSP…NGLN) and 827–1101 (GSNL…ITNN). The span at 827–848 (GSNLSNGGNSGSSFSPFNPLSG) shows a compositional bias: low complexity. The segment covering 849 to 866 (SNGGSSFGPFGSGGGGGS) has biased composition (gly residues). Low complexity-rich tracts occupy residues 867–880 (NSNI…LNSS) and 888–910 (FLAM…TIST). The segment covering 911-935 (NCTPTGGSTTNSPNFQSPMVSSSTV) has biased composition (polar residues). Composition is skewed to low complexity over residues 943 to 957 (SPNL…ISLS) and 972 to 1053 (PDSS…IQPI). Residues 1059–1076 (VNNNGSQSDLSKISDLNA) show a composition bias toward polar residues. Low complexity predominate over residues 1077–1101 (NPNTTTTTTTNTIESSSSSSSITNN). The 129-residue stretch at 1116–1244 (MINVQKLMNL…LIRSFSRKLS (129 aa)) folds into the N-terminal Ras-GEF domain. The interval 1254–1279 (IGITGGKSSRKGGGSGSGSGSGGGSG) is disordered. The span at 1264–1279 (KGGGSGSGSGSGGGSG) shows a compositional bias: gly residues. A Ras-GEF domain is found at 1317–1548 (PAEEIAKQLT…YRVSMQREPR (232 aa)).

Functionally, promotes the exchange of Ras-bound GDP by GTP. In Dictyostelium discoideum (Social amoeba), this protein is Ras guanine nucleotide exchange factor G (gefG).